The primary structure comprises 166 residues: Phosphopantetheine adenylyltransferase (166 aa).

Ser-9 provides a ligand contact to substrate. ATP-binding positions include 9–10 and His-17; that span reads SF. The substrate site is built by Lys-41, Thr-74, and Arg-88. ATP contacts are provided by residues 89 to 91, Glu-99, and 124 to 130; these read GLR and DSFISSS.

It belongs to the bacterial CoaD family. In terms of assembly, homohexamer. Mg(2+) serves as cofactor.

The protein resides in the cytoplasm. The catalysed reaction is (R)-4'-phosphopantetheine + ATP + H(+) = 3'-dephospho-CoA + diphosphate. Its pathway is cofactor biosynthesis; coenzyme A biosynthesis; CoA from (R)-pantothenate: step 4/5. Functionally, reversibly transfers an adenylyl group from ATP to 4'-phosphopantetheine, yielding dephospho-CoA (dPCoA) and pyrophosphate. This Lactobacillus gasseri (strain ATCC 33323 / DSM 20243 / BCRC 14619 / CIP 102991 / JCM 1131 / KCTC 3163 / NCIMB 11718 / NCTC 13722 / AM63) protein is Phosphopantetheine adenylyltransferase.